The chain runs to 145 residues: Arginine repressor (145 aa).

It belongs to the ArgR family.

It is found in the cytoplasm. Its pathway is amino-acid biosynthesis; L-arginine biosynthesis [regulation]. In terms of biological role, regulates arginine biosynthesis genes. The chain is Arginine repressor from Streptococcus pyogenes serotype M6 (strain ATCC BAA-946 / MGAS10394).